Here is a 151-residue protein sequence, read N- to C-terminus: Large ribosomal subunit protein bL9 (151 aa).

Belongs to the bacterial ribosomal protein bL9 family.

Functionally, binds to the 23S rRNA. The protein is Large ribosomal subunit protein bL9 of Chlorobium phaeobacteroides (strain DSM 266 / SMG 266 / 2430).